Reading from the N-terminus, the 418-residue chain is Histidine--tRNA ligase (418 aa).

It belongs to the class-II aminoacyl-tRNA synthetase family. Homodimer.

The protein resides in the cytoplasm. The catalysed reaction is tRNA(His) + L-histidine + ATP = L-histidyl-tRNA(His) + AMP + diphosphate + H(+). The chain is Histidine--tRNA ligase from Thermosipho africanus (strain TCF52B).